Reading from the N-terminus, the 142-residue chain is NTF2-related export protein 2 (142 aa).

The NTF2 domain occupies 17-136 (AAEEFVNIYY…WKIASDCFRF (120 aa)).

Associates with NXF1, NXF2, NXF3 and NXF5.

Its subcellular location is the nucleus. It is found in the cytoplasm. Its function is as follows. Regulator of protein export for NES-containing proteins. Also plays a role in mRNA nuclear export. This Bos taurus (Bovine) protein is NTF2-related export protein 2 (NXT2).